Reading from the N-terminus, the 276-residue chain is Formamidopyrimidine-DNA glycosylase (276 aa).

The active-site Schiff-base intermediate with DNA is Pro2. Glu3 (proton donor) is an active-site residue. Lys58 functions as the Proton donor; for beta-elimination activity in the catalytic mechanism. The DNA site is built by His92, Arg111, and Arg153. The FPG-type zinc finger occupies 238–272; the sequence is TVYGRERQNCLNCSSTIIKTKHSGRSTFYCRTCQY. Catalysis depends on Arg262, which acts as the Proton donor; for delta-elimination activity.

This sequence belongs to the FPG family. In terms of assembly, monomer. Zn(2+) serves as cofactor.

The catalysed reaction is Hydrolysis of DNA containing ring-opened 7-methylguanine residues, releasing 2,6-diamino-4-hydroxy-5-(N-methyl)formamidopyrimidine.. The enzyme catalyses 2'-deoxyribonucleotide-(2'-deoxyribose 5'-phosphate)-2'-deoxyribonucleotide-DNA = a 3'-end 2'-deoxyribonucleotide-(2,3-dehydro-2,3-deoxyribose 5'-phosphate)-DNA + a 5'-end 5'-phospho-2'-deoxyribonucleoside-DNA + H(+). Functionally, involved in base excision repair of DNA damaged by oxidation or by mutagenic agents. Acts as a DNA glycosylase that recognizes and removes damaged bases. Has a preference for oxidized purines, such as 7,8-dihydro-8-oxoguanine (8-oxoG). Has AP (apurinic/apyrimidinic) lyase activity and introduces nicks in the DNA strand. Cleaves the DNA backbone by beta-delta elimination to generate a single-strand break at the site of the removed base with both 3'- and 5'-phosphates. The protein is Formamidopyrimidine-DNA glycosylase of Rickettsia felis (strain ATCC VR-1525 / URRWXCal2) (Rickettsia azadi).